A 334-amino-acid chain; its full sequence is Ribosomal RNA small subunit methyltransferase H (334 aa).

Residues 34–36 (GGY), Asp52, Ala87, Asp100, and Gln107 contribute to the S-adenosyl-L-methionine site.

Belongs to the methyltransferase superfamily. RsmH family.

The protein localises to the cytoplasm. The enzyme catalyses cytidine(1402) in 16S rRNA + S-adenosyl-L-methionine = N(4)-methylcytidine(1402) in 16S rRNA + S-adenosyl-L-homocysteine + H(+). Functionally, specifically methylates the N4 position of cytidine in position 1402 (C1402) of 16S rRNA. This is Ribosomal RNA small subunit methyltransferase H from Maricaulis maris (strain MCS10) (Caulobacter maris).